Here is a 128-residue protein sequence, read N- to C-terminus: Large ribosomal subunit protein bL12 (128 aa).

This sequence belongs to the bacterial ribosomal protein bL12 family. As to quaternary structure, homodimer. Part of the ribosomal stalk of the 50S ribosomal subunit. Forms a multimeric L10(L12)X complex, where L10 forms an elongated spine to which 2 to 4 L12 dimers bind in a sequential fashion. Binds GTP-bound translation factors.

Forms part of the ribosomal stalk which helps the ribosome interact with GTP-bound translation factors. Is thus essential for accurate translation. This is Large ribosomal subunit protein bL12 from Aquifex aeolicus (strain VF5).